Consider the following 288-residue polypeptide: Extracellular ribonuclease (288 aa).

An N-terminal signal peptide occupies residues Met1–Ala26.

The protein localises to the secreted. In terms of biological role, mg(2+)-activated ribonuclease which hydrolyzes RNA apparently nonspecifically into oligonucleotides with 5'-terminal phosphate. The protein is Extracellular ribonuclease (bsn) of Bacillus subtilis (strain 168).